A 152-amino-acid polypeptide reads, in one-letter code: Urease accessory protein UreE (152 aa).

The protein belongs to the UreE family.

The protein localises to the cytoplasm. Involved in urease metallocenter assembly. Binds nickel. Probably functions as a nickel donor during metallocenter assembly. In Psychromonas ingrahamii (strain DSM 17664 / CCUG 51855 / 37), this protein is Urease accessory protein UreE.